A 1045-amino-acid chain; its full sequence is E3 ubiquitin-protein ligase Topors (1045 aa).

Residues 1 to 35 (MGSQPPLGSPLSREEGEAPPPAPASEGRRRSRRVR) are disordered. The interval 1–195 (MGSQPPLGSP…RERNASVYSP (195 aa)) is E3 ubiquitin-protein ligase activity. The required for DNA-binding stretch occupies residues 51–374 (ELAASAPARP…MAAFDQHANY (324 aa)). Glycyl lysine isopeptide (Lys-Gly) (interchain with G-Cter in SUMO2) cross-links involve residues Lys-73, Lys-76, Lys-83, and Lys-88. Ser-98 bears the Phosphoserine mark. The RING-type zinc-finger motif lies at 103 to 142 (CPICLDRFDNVSYLDRCLHKFCFRCVQEWSKNKAECPLCK). A Glycyl lysine isopeptide (Lys-Gly) (interchain with G-Cter in SUMO2) cross-link involves residue Lys-159. Ser-194 carries the post-translational modification Phosphoserine. A Glycyl lysine isopeptide (Lys-Gly) (interchain with G-Cter in SUMO2) cross-link involves residue Lys-249. Residues 437 to 574 (SLLNTSDSSD…STSLSSPRNL (138 aa)) are required for sumoylation and localization to discrete nuclear foci. The interaction with SUMO1 stretch occupies residues 437–654 (SLLNTSDSSD…RSRTRDSSWS (218 aa)). Positions 442-475 (SDSSDEELVTGGATSQIQGVQTNDDLNNDSDDSS) are disordered. Over residues 453–463 (GATSQIQGVQT) the composition is skewed to polar residues. Positions 456-731 (SQIQGVQTND…RRTLSRAHYS (276 aa)) are interaction with p53/TP53. The segment at 456–882 (SQIQGVQTND…GKATDTTKHH (427 aa)) is interaction with TOP1. Ser-499 is modified (phosphoserine). The interval 511–692 (ETVKTQEQEQ…RSRNRDRYYL (182 aa)) is disordered. The span at 521–534 (SYSSGDSDVSRCSS) shows a compositional bias: low complexity. Basic and acidic residues predominate over residues 539 to 565 (LGKDEQINKGHCDSSTRIKSKKEEKRS). A Glycyl lysine isopeptide (Lys-Gly) (interchain with G-Cter in SUMO) cross-link involves residue Lys-560. Polar residues predominate over residues 566–578 (TSLSSPRNLNSSV). Ser-585 carries the phosphoserine modification. Basic residues-rich tracts occupy residues 588 to 597 (NHRHRKRGRS), 613 to 630 (KNHR…KRSR), and 637 to 647 (PRGRRDKKRSR). Low complexity predominate over residues 654–669 (SRRSQTLSLSSESTSR). Lys-701 is covalently cross-linked (Glycyl lysine isopeptide (Lys-Gly) (interchain with G-Cter in SUMO2)). Positions 713-936 (RDGYESSYRR…DNSGPQDPLQ (224 aa)) are disordered. Ser-718 is modified (phosphoserine; by PLK1). Residues 721 to 730 (RRRTLSRAHY) are compositionally biased toward basic residues. The segment covering 731-747 (SRQSSSPEFRVQSFSER) has biased composition (polar residues). Residue Ser-734 is modified to Phosphoserine. Composition is skewed to basic and acidic residues over residues 755–766 (NHSERKYYYYER) and 816–825 (FASKAKDSHY). Glycyl lysine isopeptide (Lys-Gly) (interchain with G-Cter in SUMO2) cross-links involve residues Lys-819 and Lys-837. Residues 854 to 863 (KHKRRKRKTR) show a composition bias toward basic residues. The interval 854–917 (KHKRRKRKTR…ITIDSDSDKD (64 aa)) is interaction with UBE2I. Residues Ser-864 and Ser-866 each carry the phosphoserine modification. A compositionally biased stretch (basic residues) spans 880–897 (KHHKKKKKKHKKKHKKHH). Residues Ser-912, Ser-914, and Ser-1028 each carry the phosphoserine modification. The span at 913-923 (DSDKDSEVKED) shows a compositional bias: basic and acidic residues.

In terms of assembly, interacts with PARK7/DJ-1. Interacts with TOP1. Interacts with p53/TP53; can both ubiquitinate and sumoylate p53/TP53. Interacts with the SUMO1 conjugating enzyme UBE2I. Interacts with SUMO1. Interacts with NKX3-1; polyubiquitinates NKX3-1 and induces its proteasomal degradation. Interacts with SIN3A; sumoylates SIN3A. Interacts with IKBKE; induced by DNA damage. In terms of processing, phosphorylation at Ser-98 regulates the E3 ubiquitin-protein ligase activity but not the SUMO1-protein ligase activity. Phosphorylation at Ser-718 increases the E3 ubiquitin-protein ligase activity versus the SUMO1-protein ligase activity resulting in increased p53/TP53 ubiquitination and degradation. Post-translationally, sumoylated. As to expression, expressed at highest levels in testis and at lower levels in adrenal gland, bone marrow, brain, colon, heart, kidney, liver, muscle, ovary, pancreas, placenta, prostate, skeletal muscle, skin, small intestine, spleen, stomach, testis, thymus, thyroid and uterus. Expressed in the alveolar epithelium of the lung. Expression is commonly decreased in colon adenocarcinomas and lung cancers.

The protein resides in the nucleus. Its subcellular location is the PML body. The catalysed reaction is S-ubiquitinyl-[E2 ubiquitin-conjugating enzyme]-L-cysteine + [acceptor protein]-L-lysine = [E2 ubiquitin-conjugating enzyme]-L-cysteine + N(6)-ubiquitinyl-[acceptor protein]-L-lysine.. In terms of biological role, functions as an E3 ubiquitin-protein ligase and as an E3 SUMO1-protein ligase. Probable tumor suppressor involved in cell growth, cell proliferation and apoptosis that regulates p53/TP53 stability through ubiquitin-dependent degradation. May regulate chromatin modification through sumoylation of several chromatin modification-associated proteins. May be involved in DNA damage-induced cell death through IKBKE sumoylation. In Homo sapiens (Human), this protein is E3 ubiquitin-protein ligase Topors (TOPORS).